Here is a 1186-residue protein sequence, read N- to C-terminus: Syntaxin-binding protein 5-like (1186 aa).

At Met-1 the chain carries N-acetylmethionine. A disordered region spans residues 15-40 (ASSPGSGSSSGSNSGGGAGSGSVHPA). Over residues 16–26 (SSPGSGSSSGS) the composition is skewed to low complexity. 10 WD repeats span residues 74-107 (TALA…CYCQ), 114-153 (VLQL…SLKF), 158-194 (ITYC…GYVI), 213-247 (HLSD…ELRV), 253-285 (IHSI…PSRP), 307-349 (PILK…KAIT), 357-391 (IVEF…VVDL), 413-490 (TCTA…YKLK), 518-629 (QMIY…ELVI), and 643-705 (TSLA…IADN). Residue Thr-568 is modified to Phosphothreonine. Phosphoserine is present on residues Ser-574, Ser-589, and Ser-593. Position 596 is a phosphothreonine (Thr-596). Ser-599 carries the post-translational modification Phosphoserine. An Omega-N-methylarginine modification is found at Arg-709. Polar residues predominate over residues 748-769 (TSDHVNGHCTSPTSQSCSSGKR). Residues 748–771 (TSDHVNGHCTSPTSQSCSSGKRLS) are disordered. Residues Ser-763, Ser-765, Ser-766, Ser-771, Ser-772, Ser-793, Ser-800, Ser-812, Ser-820, Ser-822, and Ser-823 each carry the phosphoserine modification. WD repeat units lie at residues 832 to 889 (ITAL…SGTF), 898 to 969 (TFSC…QTCL), 974 to 1018 (ITET…LDVN), and 1032 to 1055 (CFTN…TYSQ). At Thr-1093 the chain carries Phosphothreonine. A v-SNARE coiled-coil homology domain is found at 1121 to 1181 (SIEGMKGAAG…HELMLKYKDK (61 aa)).

This sequence belongs to the WD repeat L(2)GL family. As to quaternary structure, interacts with STX1A and STX4. Post-translationally, phosphorylated, leading to STXBP5L increased turnover and subsequent de-repression of insulin secretion. Phosphorylated on serine residues in response to glucose or phorbol esters. In terms of processing, ubiquitinated by the E3 ligase SYVN1, leading to STXBP5L proteasomal degradation. Detected in kidney, hippocampus and lung carcinoma.

The protein localises to the cytoplasm. It localises to the cell membrane. Its subcellular location is the membrane. In terms of biological role, plays a role in vesicle trafficking and exocytosis inhibition. In pancreatic beta-cells, inhibits insulin secretion probably by interacting with and regulating STX1A and STX4, key t-SNARE proteins involved in the fusion of insulin granules to the plasma membrane. Also plays a role in neurotransmitter release by inhibiting basal acetylcholine release from axon terminals and by preventing synaptic fatigue upon repetitive stimulation. Promotes as well axonal outgrowth. This Homo sapiens (Human) protein is Syntaxin-binding protein 5-like (STXBP5L).